The primary structure comprises 91 residues: Probable Fe(2+)-trafficking protein (91 aa).

The protein belongs to the Fe(2+)-trafficking protein family.

In terms of biological role, could be a mediator in iron transactions between iron acquisition and iron-requiring processes, such as synthesis and/or repair of Fe-S clusters in biosynthetic enzymes. This Mannheimia succiniciproducens (strain KCTC 0769BP / MBEL55E) protein is Probable Fe(2+)-trafficking protein.